The chain runs to 65 residues: Lantipeptide Flvbeta.h (65 aa).

Positions 1–27 (MERYGHLAGVIPVDEIDDMFESNVIGG) are cleaved as a propeptide — cleaved by FlvT. Thr28 is subject to 2,3-didehydrobutyrine; by FlvM2. Residues 29–33 (SSIDC) constitute a cross-link (lanthionine (Ser-Cys); by FlvM2). At Ser30 the chain carries 2,3-didehydroalanine (Ser); by FlvM2. Residue Thr44 is modified to 2,3-didehydrobutyrine; by FlvM2. Residues 48-54 (TVRIEFC) constitute a cross-link (beta-methyllanthionine (Thr-Cys); by FlvM2). Positions 56–59 (SAAC) form a cross-link, lanthionine (Ser-Cys); by FlvM2. The beta-methyllanthionine (Thr-Cys); by FlvM2 cross-link spans 60–63 (TYSC).

In terms of processing, contains LL-lanthionine, DL-lanthionine, and DL-beta-methyllanthionine, when coepressed in E.coli with the flavecin synthetase FlvM2.

Its subcellular location is the secreted. Its function is as follows. Lanthionine-containing peptide that does probably not show antibacterial activity, since its analog [+2]Flvbeta.h does not show antibacterial activity against M.luteus. Also does not show antibiotic activity when tested with [Del2]Flvalpha.a, an analog of Flvalpha.a, which is encoded by the same operon than Flvbeta.h. The bactericidal activity of lantibiotics is based on depolarization of energized bacterial cytoplasmic membranes, initiated by the formation of aqueous transmembrane pores. This chain is Lantipeptide Flvbeta.h, found in Ruminococcus flavefaciens.